The chain runs to 201 residues: Holliday junction resolvase RecU (201 aa).

Mg(2+) contacts are provided by Thr85, Asp87, Glu100, and Gln119.

This sequence belongs to the RecU family. The cofactor is Mg(2+).

It is found in the cytoplasm. The catalysed reaction is Endonucleolytic cleavage at a junction such as a reciprocal single-stranded crossover between two homologous DNA duplexes (Holliday junction).. Functionally, endonuclease that resolves Holliday junction intermediates in genetic recombination. Cleaves mobile four-strand junctions by introducing symmetrical nicks in paired strands. Promotes annealing of linear ssDNA with homologous dsDNA. Required for DNA repair, homologous recombination and chromosome segregation. The protein is Holliday junction resolvase RecU of Geobacillus thermodenitrificans (strain NG80-2).